A 489-amino-acid chain; its full sequence is Aerolysin (489 aa).

Residues 1-24 (MMNRIITANLANLASSLMLAQVLG) form the signal peptide. Intrachain disulfides connect Cys44–Cys100 and Cys184–Cys189. The segment at 70–86 (WQITGLADRWVIMGPGY) is interaction with host N-linked glycan. Positions 257–289 (YSLSEKVTTKNKFQWPLVGETELAIEIAASQSW) are part of the transmembrane beta-barrel after proteolytic activation of the toxin and insertion into the host membrane. Positions 347–356 (RWGGNAWYTH) are interaction with glycans from host GPI-anchor. The propeptide occupies 445-489 (TRSAKAAQLRSASAEEVALTSVDLDSEALANEGFGNVSLTIVPVQ).

It belongs to the aerolysin family. As to quaternary structure, homodimer in solution; homoheptamer in the host membrane. After binding to GPI-anchored proteins in target membranes and proteolytic removal of the C-terminal propeptide, the protein assembles into a heptameric pre-pore complex. A further conformation change leads to insertion into the host membrane. In terms of processing, proteolytic cleavage and subsequent release of the propeptide trigger a major conformation change, leading to the formation of a heptameric pre-pore that then inserts into the host membrane.

The protein localises to the secreted. It is found in the host cell membrane. Functionally, secreted, cytolytic toxin that forms pores in host membranes after proteolytic removal of a C-terminal propeptide, leading to destruction of the membrane permeability barrier and cell death. The pores are formed by transmembrane beta-strands and are approximately 3 nm in diameter. This is Aerolysin (ash3) from Aeromonas salmonicida.